A 548-amino-acid chain; its full sequence is Membrane protein insertase YidC (548 aa).

The helical transmembrane segment at 6 to 26 threads the bilayer; sequence NLLIIALLFVSFMIWQAWEQD. Residues 28 to 52 are disordered; that stretch reads NPQPQQQTTQTTTTAAGSAADQGVP. A compositionally biased stretch (low complexity) spans 29–41; that stretch reads PQPQQQTTQTTTT. A run of 4 helical transmembrane segments spans residues 345–365, 420–440, 458–478, and 499–519; these read KFIH…TFIV, LGGC…YYML, LSAQ…MFFI, and PVIF…YYIV.

It belongs to the OXA1/ALB3/YidC family. Type 1 subfamily. In terms of assembly, interacts with the Sec translocase complex via SecD. Specifically interacts with transmembrane segments of nascent integral membrane proteins during membrane integration.

Its subcellular location is the cell inner membrane. Its function is as follows. Required for the insertion and/or proper folding and/or complex formation of integral membrane proteins into the membrane. Involved in integration of membrane proteins that insert both dependently and independently of the Sec translocase complex, as well as at least some lipoproteins. Aids folding of multispanning membrane proteins. This is Membrane protein insertase YidC from Klebsiella pneumoniae (strain 342).